The following is a 478-amino-acid chain: Zinc metalloproteinase/disintegrin (478 aa).

Residues 1 to 20 (MIQVLLVTICLAAFPYQGSS) form the signal peptide. Residues 21–187 (IILESGNVND…PIKKASHLNL (167 aa)) constitute a propeptide that is removed on maturation. The region spanning 193–389 (RYVEIVIVVD…QKPQCILKKP (197 aa)) is the Peptidase M12B domain. Cystine bridges form between C304–C384, C344–C368, and C346–C351. H329 serves as a coordination point for Zn(2+). Residue E330 is part of the active site. Residues H333 and H339 each contribute to the Zn(2+) site. The propeptide occupies 390-408 (LRTDTVSTPVSGNELLEAR). The region spanning 397 to 478 (TPVSGNELLE…ADCPRNVLYG (82 aa)) is the Disintegrin domain. Disulfide bonds link C411/C420, C413/C421, C426/C440, C434/C464, C439/C443, and C452/C471. The propeptide occupies 474–478 (NVLYG).

The protein belongs to the venom metalloproteinase (M12B) family. P-II subfamily. P-IIa sub-subfamily. The cofactor is Zn(2+). Expressed by the venom gland.

It localises to the secreted. Its function is as follows. Snake venom zinc metalloproteinase that causes hemorrhage by provoking the degradation of the sub-endothelial matrix proteins (fibronectin, laminin, type IV collagen, nidogen, and gelatins). Displays low cytotoxicity. In vitro, inhibits cancer cell migration (human breast cancer cell line MDA-MB-231) with a significant rate after 24 hours of incubation. The polypeptide is Zinc metalloproteinase/disintegrin (MPII) (Crotalus durissus collilineatus (Brazilian rattlesnake)).